The primary structure comprises 238 residues: Ribosomal RNA small subunit methyltransferase G (238 aa).

S-adenosyl-L-methionine is bound by residues G77, F82, 128–129 (AE), and R147.

Belongs to the methyltransferase superfamily. RNA methyltransferase RsmG family.

It is found in the cytoplasm. Specifically methylates the N7 position of guanine in position 535 of 16S rRNA. This is Ribosomal RNA small subunit methyltransferase G from Exiguobacterium sp. (strain ATCC BAA-1283 / AT1b).